Here is an 815-residue protein sequence, read N- to C-terminus: uncharacterized protein (815 aa).

A DNA-binding region (zn(2)-C6 fungal-type) is located at residues 31 to 57 (CDMCRRKKIKCDGLRPCKNCKAGKLEC). A helical transmembrane segment spans residues 560–580 (YWTTVYCGFSTIVTLIFAALL). Disordered regions lie at residues 646 to 668 (ESNV…SNTQ) and 769 to 792 (DPDV…FNPT). The segment covering 780 to 792 (SSSLNNSTPFNPT) has biased composition (polar residues).

It localises to the cytoplasm. It is found in the nucleus membrane. This is an uncharacterized protein from Schizosaccharomyces pombe (strain 972 / ATCC 24843) (Fission yeast).